The following is a 544-amino-acid chain: CTP synthase (544 aa).

Positions 1–265 (MTRYIFITGG…DTQVLAYFGL (265 aa)) are amidoligase domain. Serine 13 contacts CTP. Serine 13 provides a ligand contact to UTP. Residue 14–19 (SLGKGL) coordinates ATP. Position 54 (tyrosine 54) interacts with L-glutamine. ATP is bound at residue aspartate 71. Mg(2+) is bound by residues aspartate 71 and glutamate 139. Residues 146–148 (DIE), 186–191 (KTKPTQ), and lysine 222 each bind CTP. Residues 186–191 (KTKPTQ) and lysine 222 contribute to the UTP site. Residue valine 240 coordinates ATP. The Glutamine amidotransferase type-1 domain occupies 291–543 (TIAVVGKYTS…IKAAIEQSRL (253 aa)). L-glutamine is bound at residue glycine 353. The Nucleophile; for glutamine hydrolysis role is filled by cysteine 380. Residues 381 to 384 (FGMQ), glutamate 404, and arginine 472 each bind L-glutamine. Catalysis depends on residues histidine 516 and glutamate 518.

This sequence belongs to the CTP synthase family. In terms of assembly, homotetramer.

The catalysed reaction is UTP + L-glutamine + ATP + H2O = CTP + L-glutamate + ADP + phosphate + 2 H(+). The enzyme catalyses L-glutamine + H2O = L-glutamate + NH4(+). It catalyses the reaction UTP + NH4(+) + ATP = CTP + ADP + phosphate + 2 H(+). It functions in the pathway pyrimidine metabolism; CTP biosynthesis via de novo pathway; CTP from UDP: step 2/2. Its activity is regulated as follows. Allosterically activated by GTP, when glutamine is the substrate; GTP has no effect on the reaction when ammonia is the substrate. The allosteric effector GTP functions by stabilizing the protein conformation that binds the tetrahedral intermediate(s) formed during glutamine hydrolysis. Inhibited by the product CTP, via allosteric rather than competitive inhibition. Its function is as follows. Catalyzes the ATP-dependent amination of UTP to CTP with either L-glutamine or ammonia as the source of nitrogen. Regulates intracellular CTP levels through interactions with the four ribonucleotide triphosphates. The polypeptide is CTP synthase (Azospirillum brasilense).